The primary structure comprises 231 residues: Nuclear transcription factor Y subunit C-9 (231 aa).

The disordered stretch occupies residues 211–231 (NPYMGQPMWQQQAPDQPDQEN).

The protein belongs to the NFYC/HAP5 subunit family. As to quaternary structure, heterotrimeric transcription factor composed of three components, NF-YA, NF-YB and NF-YC. Interacts with NFYA2, NFYB2, CO and RGA. Interacts with REF6 (via N-terminus). As to expression, ubiquitous. Present in etiolated seedlings.

It is found in the nucleus. Functionally, stimulates the transcription of various genes by recognizing and binding to a CCAAT motif in promoters. Interacts with REF6 to directly regulate SOC1 transcription in response to flowering signals from photoperiod and gibberellic acid pathways. The polypeptide is Nuclear transcription factor Y subunit C-9 (NFYC9) (Arabidopsis thaliana (Mouse-ear cress)).